Consider the following 1049-residue polypeptide: Vacuolar membrane protease (1049 aa).

Over 1–11 (MKCYNPSAFVP) the chain is Cytoplasmic. Residues 12–32 (MAVTLVTVIIYLGVFIPLLII) traverse the membrane as a helical segment. The Vacuolar segment spans residues 33–438 (QETVPSAPDD…TVFAVFKLRT (406 aa)). N-linked (GlcNAc...) asparagine glycosylation is present at Asn50. A disordered region spans residues 114 to 135 (DAEAPESVPSPSNSNDGSAERY). Asn157 carries an N-linked (GlcNAc...) asparagine glycan. Positions 221 and 233 each coordinate Zn(2+). Glu267 acts as the Proton acceptor in catalysis. Residues Glu268, Glu293, and His365 each coordinate Zn(2+). The chain crosses the membrane as a helical span at residues 439–459 (LFAWSLTLLIAAPLMLFAVSY). Over 460–495 (LLNRQDKFYFFAGSIKAKGPEDEPISLGGWRGAFRY) the chain is Cytoplasmic. The chain crosses the membrane as a helical span at residues 496-516 (PITLIITCAITFGCASLINKI). Topologically, residues 517–526 (NPMIVYSSPY) are vacuolar. A helical membrane pass occupies residues 527 to 547 (SVWSMSASLFFSIFWFIMAGC). At 548 to 557 (NFVRPSALQR) the chain is on the cytoplasmic side. A helical membrane pass occupies residues 558–578 (GYAFMWLFVFGWIILVAATVY). Residues 579–585 (EDRFKIS) lie on the Vacuolar side of the membrane. Residues 586–606 (GGYLFVFYEAAIFLATLIAIG) traverse the membrane as a helical segment. Residues 607–740 (EQFALPKKST…LPIWTWLVQY (134 aa)) lie on the Cytoplasmic side of the membrane. Residues 621–686 (SQLDHDGNQD…IGGGAPTQRS (66 aa)) are disordered. Positions 622-633 (QLDHDGNQDSHH) are enriched in basic and acidic residues. Acidic residues predominate over residues 655 to 664 (GQEEDPEDNV). The chain crosses the membrane as a helical span at residues 741-761 (LLVGPFILIVVGQVGLFLVAA). Residues 762–773 (LHQTGTDGSPLL) are Vacuolar-facing. Residues 774 to 794 (LPYLVVAVFSILLLLPVTPFI) form a helical membrane-spanning segment. The Cytoplasmic portion of the chain corresponds to 795-801 (HRLTHHM). Residues 802–822 (PTFFFLVFIGTLIYNLVAFPF) traverse the membrane as a helical segment. Topologically, residues 823-1049 (SPNNRYKAYF…LVEGSKRFVV (227 aa)) are vacuolar. Asn914 is a glycosylation site (N-linked (GlcNAc...) asparagine).

Belongs to the peptidase M28 family. It depends on Zn(2+) as a cofactor.

The protein resides in the vacuole membrane. Functionally, may be involved in vacuolar sorting and osmoregulation. The chain is Vacuolar membrane protease from Botryotinia fuckeliana (strain B05.10) (Noble rot fungus).